We begin with the raw amino-acid sequence, 1093 residues long: GPI ethanolamine phosphate transferase 3, catalytic subunit (1093 aa).

A helical membrane pass occupies residues 4–24; it reads VSVLLFLAWVCFLFYAGIALF. An N-linked (GlcNAc...) asparagine glycan is attached at asparagine 268. A run of 9 helical transmembrane segments spans residues 460 to 480, 483 to 503, 512 to 532, 669 to 689, 702 to 722, 748 to 768, 831 to 851, 856 to 876, and 945 to 965; these read AAAC…GFLF, LLLI…GVSV, VVLG…KAWV, LWYG…RLWL, VLFV…YWAL, VMGL…TVLV, SVYS…LMLL, VSLV…LLAA, and FASH…PFLC. Residues 971-991 form a disordered region; it reads KRRQPLPGSESEARVRPEEEE. The next 2 membrane-spanning stretches (helical) occupy residues 1018-1038 and 1052-1072; these read LKYL…ASIL and FIFE…GIAL.

This sequence belongs to the PIGG/PIGN/PIGO family. PIGO subfamily. As to quaternary structure, forms the ethanolamine phosphate transferase 3 complex composed by PIGO and PIGF. PIGF is required to stabilize PIGO.

It is found in the endoplasmic reticulum membrane. Its pathway is glycolipid biosynthesis; glycosylphosphatidylinositol-anchor biosynthesis. Catalytic subunit of the ethanolamine phosphate transferase 3 complex that transfers an ethanolamine phosphate (EtNP) from a phosphatidylethanolamine (PE) to the 6-OH position of the third alpha-1,2-linked mannose of the an alpha-D-Man-(1-&gt;2)-alpha-D-Man-(1-&gt;6)-2-PEtn-alpha-D-Man-(1-&gt;4)-alpha-D-GlcN-(1-&gt;6)-(1-radyl,2-acyl-sn-glycero-3-phospho)-2-acyl-inositol (also termed H6) intermediate to generate a 6-PEtn-alpha-D-Man-(1-&gt;2)-alpha-D-Man-(1-&gt;6)-2-PEtn-alpha-D-Man-(1-&gt;4)-alpha-D-GlcN-(1-&gt;6)-(1-radyl,2-acyl-sn-glycero-3-phospho)-2-acyl-inositol (also termed H7) and participates in the tenth step of the glycosylphosphatidylinositol-anchor biosynthesis. This chain is GPI ethanolamine phosphate transferase 3, catalytic subunit, found in Mus musculus (Mouse).